The primary structure comprises 610 residues: Elongation factor 4 (610 aa).

The tr-type G domain maps to 11 to 193; that stretch reads EKIRNFSIIA…QIVEKVPAPT (183 aa). GTP-binding positions include 23–28 and 140–143; these read DHGKST and NKID.

The protein belongs to the TRAFAC class translation factor GTPase superfamily. Classic translation factor GTPase family. LepA subfamily.

The protein localises to the cell membrane. It carries out the reaction GTP + H2O = GDP + phosphate + H(+). In terms of biological role, required for accurate and efficient protein synthesis under certain stress conditions. May act as a fidelity factor of the translation reaction, by catalyzing a one-codon backward translocation of tRNAs on improperly translocated ribosomes. Back-translocation proceeds from a post-translocation (POST) complex to a pre-translocation (PRE) complex, thus giving elongation factor G a second chance to translocate the tRNAs correctly. Binds to ribosomes in a GTP-dependent manner. The protein is Elongation factor 4 of Streptococcus pyogenes serotype M12 (strain MGAS9429).